Reading from the N-terminus, the 364-residue chain is MKFIDEARIEVIAGDGGNGSASMRREKFVPFGGPDGGDGGRGGSVWAVADRNINTLIDYRFAKKHLARNGENGRGADCYGAAGDDITLRMPVGTAIYDADTEELIADLTIDGQRLCLAQGGEGGWGNIHFKSSTNRAPRQKTDGKAGERRNLRLELKVLADVGLLGMPNAGKSTLITAISNARPKIADYPFTTLHPNLGVVRTGPSKSFVVADIPGLIEGAAEGAGLGHQFLRHLQRTRVLLHVVDLAPFDESVDPVAEAKAIVGELKKYDAELFDKPRWLVLNKLDMVPEDEREARVKDFVKRFKWKGPVHRISALTHDGTQALVHAIQEYLDELRAEEDAAAAAPDQRLDPTLHNVDHDDQA.

Residues methionine 1–leucine 159 enclose the Obg domain. The segment at isoleucine 128–glycine 147 is disordered. One can recognise an OBG-type G domain in the interval alanine 160–aspartate 334. GTP-binding positions include glycine 166–serine 173, phenylalanine 191–histidine 195, aspartate 213–glycine 216, asparagine 284–aspartate 287, and serine 315–leucine 317. Residues serine 173 and threonine 193 each coordinate Mg(2+). The tract at residues glutamate 340–alanine 364 is disordered. A compositionally biased stretch (basic and acidic residues) spans glutamine 349–alanine 364.

Belongs to the TRAFAC class OBG-HflX-like GTPase superfamily. OBG GTPase family. As to quaternary structure, monomer. The cofactor is Mg(2+).

It localises to the cytoplasm. In terms of biological role, an essential GTPase which binds GTP, GDP and possibly (p)ppGpp with moderate affinity, with high nucleotide exchange rates and a fairly low GTP hydrolysis rate. Plays a role in control of the cell cycle, stress response, ribosome biogenesis and in those bacteria that undergo differentiation, in morphogenesis control. This Ralstonia pickettii (strain 12J) protein is GTPase Obg.